A 442-amino-acid chain; its full sequence is Glycolipid 2-alpha-mannosyltransferase (442 aa).

The Cytoplasmic segment spans residues 1–11 (MALFLSKRLLR). The chain crosses the membrane as a helical; Signal-anchor for type II membrane protein span at residues 12 to 30 (FTVIAGAVIVLLLTLNSNS). Residues 31–118 (RTQQYIPSSI…YITPSFANKA (88 aa)) form a stem region region. Residues 31-442 (RTQQYIPSSI…KPKNWKKFRE (412 aa)) lie on the Lumenal side of the membrane. Residues 68–95 (EQSALNSEASEDSEAMDEESKALKAAAE) form a disordered region. Residues 85–95 (EESKALKAAAE) are compositionally biased toward basic and acidic residues. Residues 119–442 (GKPKACYVTL…KPKNWKKFRE (324 aa)) form a catalytic region. Residue Asn197 is glycosylated (N-linked (GlcNAc...) asparagine). Catalysis depends on Glu329, which acts as the Nucleophile.

Belongs to the glycosyltransferase 15 family. Mn(2+) serves as cofactor.

Its subcellular location is the golgi apparatus membrane. It participates in protein modification; protein glycosylation. Mannosyltransferase that transfers an alpha-D-mannosyl residue from GDP-mannose into lipid-linked oligosaccharide, forming an alpha-(1-&gt;2)-D-mannosyl-D-mannose linkage. Required for the attachment of the third mannose residue of O-linked saccharides. This chain is Glycolipid 2-alpha-mannosyltransferase (KRE2), found in Saccharomyces cerevisiae (strain ATCC 204508 / S288c) (Baker's yeast).